Here is a 207-residue protein sequence, read N- to C-terminus: Large ribosomal subunit protein uL4 (207 aa).

The disordered stretch occupies residues 54 to 74 (RSDVRGGGKKPYRQKGTGNAR).

The protein belongs to the universal ribosomal protein uL4 family. As to quaternary structure, part of the 50S ribosomal subunit.

One of the primary rRNA binding proteins, this protein initially binds near the 5'-end of the 23S rRNA. It is important during the early stages of 50S assembly. It makes multiple contacts with different domains of the 23S rRNA in the assembled 50S subunit and ribosome. Its function is as follows. Forms part of the polypeptide exit tunnel. In Magnetococcus marinus (strain ATCC BAA-1437 / JCM 17883 / MC-1), this protein is Large ribosomal subunit protein uL4.